A 98-amino-acid chain; its full sequence is NADH-ubiquinone oxidoreductase chain 4L (98 aa).

Helical transmembrane passes span methionine 1 to methionine 21, serine 29 to leucine 49, and isoleucine 61 to valine 81.

This sequence belongs to the complex I subunit 4L family. Core subunit of respiratory chain NADH dehydrogenase (Complex I) which is composed of 45 different subunits.

Its subcellular location is the mitochondrion inner membrane. It catalyses the reaction a ubiquinone + NADH + 5 H(+)(in) = a ubiquinol + NAD(+) + 4 H(+)(out). Its function is as follows. Core subunit of the mitochondrial membrane respiratory chain NADH dehydrogenase (Complex I) which catalyzes electron transfer from NADH through the respiratory chain, using ubiquinone as an electron acceptor. Part of the enzyme membrane arm which is embedded in the lipid bilayer and involved in proton translocation. The sequence is that of NADH-ubiquinone oxidoreductase chain 4L (MT-ND4L) from Rousettus aegyptiacus (Egyptian fruit bat).